Reading from the N-terminus, the 161-residue chain is SsrA-binding protein (161 aa).

It belongs to the SmpB family.

It is found in the cytoplasm. Its function is as follows. Required for rescue of stalled ribosomes mediated by trans-translation. Binds to transfer-messenger RNA (tmRNA), required for stable association of tmRNA with ribosomes. tmRNA and SmpB together mimic tRNA shape, replacing the anticodon stem-loop with SmpB. tmRNA is encoded by the ssrA gene; the 2 termini fold to resemble tRNA(Ala) and it encodes a 'tag peptide', a short internal open reading frame. During trans-translation Ala-aminoacylated tmRNA acts like a tRNA, entering the A-site of stalled ribosomes, displacing the stalled mRNA. The ribosome then switches to translate the ORF on the tmRNA; the nascent peptide is terminated with the 'tag peptide' encoded by the tmRNA and targeted for degradation. The ribosome is freed to recommence translation, which seems to be the essential function of trans-translation. This is SsrA-binding protein from Haemophilus influenzae (strain 86-028NP).